A 27-amino-acid polypeptide reads, in one-letter code: uncharacterized protein (27 aa).

The helical transmembrane segment at 6-26 (IIVLGALIALLELIRFLLQLL) threads the bilayer.

It belongs to the DinQ family.

It localises to the cell inner membrane. This is an uncharacterized protein from Escherichia coli (strain K12).